The chain runs to 231 residues: PX domain-containing protein 1 (231 aa).

A PX domain is found at 1–134; it reads MASAVFEGTS…TFFERSPLDQ (134 aa).

The chain is PX domain-containing protein 1 (PXDC1) from Homo sapiens (Human).